Consider the following 1088-residue polypeptide: RNA-directed RNA polymerase (1088 aa).

Positions L501–I687 constitute a RdRp catalytic domain.

The protein belongs to the reoviridae RNA-directed RNA polymerase family. As to quaternary structure, interacts with VP3 (Potential). Interacts with VP2; this interaction activates VP1. Interacts with NSP5; this interaction is probably necessary for the formation of functional virus factories. Interacts with NSP2; this interaction is weak. Requires Mg(2+) as cofactor.

It is found in the virion. It catalyses the reaction RNA(n) + a ribonucleoside 5'-triphosphate = RNA(n+1) + diphosphate. Functionally, RNA-directed RNA polymerase that is involved in both transcription and genome replication. Together with VP3 capping enzyme, forms an enzyme complex positioned near the channels situated at each of the five-fold vertices of the core. Following infection, the outermost layer of the virus is lost, leaving a double-layered particle (DLP) made up of the core and VP6 shell. VP1 then catalyzes the transcription of fully conservative plus-strand genomic RNAs that are extruded through the DLP's channels into the cytoplasm where they function as mRNAs for translation of viral proteins. One copy of each of the viral (+)RNAs is also recruited during core assembly, together with newly synthesized polymerase complexes and VP2. The polymerase of these novo-formed particles catalyzes the synthesis of complementary minus-strands leading to dsRNA formation. To do so, the polymerase specifically recognizes and binds 4 bases 5'-UGUG-3' in the conserved 3'-sequence of plus-strand RNA templates. VP2 presumably activates the autoinhibited VP1-RNA complex to coordinate packaging and genome replication. Once dsRNA synthesis is complete, the polymerase switches to the transcriptional mode, thus providing secondary transcription. The polypeptide is RNA-directed RNA polymerase (Bos taurus (Bovine)).